A 352-amino-acid polypeptide reads, in one-letter code: MSASFPLEALQAGHWFKLICGASYQHLPVIRNLALTYALAGADCVDVAAEPAVVRSALAGLAAYERLTGRDRPWLMVSLNDGEDLHFRRAWFDPDRCPTDCPRPCERVCPTDAITSTGVQRDRCYGCGRCLPICPLGLIEAQAWQVDAAALLPELLDLGINAIEIHTQVGHQKEFQQLWQQLQPWLPQLQAIAISCPAHPEAIAYLWDLQELVGNTVETVIWQTDGRPMSGDIGAGTTHAAVRFAQAMLTEGPPGHVQLAGGTNAHTVAKLQELKLLAPQVSRFVAGIACGGAARTPLAELLEPLAEQQRSLEAHPEVLQAAVTTAIALVGPLKQAVGGATRSIPAFLLRTP.

4Fe-4S ferredoxin-type domains follow at residues 88–119 and 121–144; these read RRAWFDPDRCPTDCPRPCERVCPTDAITSTGV and RDRCYGCGRCLPICPLGLIEAQAW. Residues cysteine 97, cysteine 101, cysteine 105, cysteine 109, cysteine 124, cysteine 127, cysteine 130, and cysteine 134 each coordinate [4Fe-4S] cluster.

In terms of assembly, interacts with KaiA, CikA and SasA; the complexes do not follow circadian rhythms. Requires [4Fe-4S] cluster as cofactor.

Its function is as follows. Functions in an input pathway to the Kai circadian clock. Probably senses the metabolic state of the cell via plastoquinone levels and informs the clock to modulate the photoperiod length. Deletion decreases the ability of the bacteria to modulate the circadian period in response to altered light regimes. Mild overexpression increases the photoperiod. Rapidly degraded in the presence of the quinone analog DBMIB (2,5-dibromo-3-methyl-6-isopropyl-p-benzoquinone), an artifical electron acceptor for photosystem II that reduces the plastoquinone pool. Partially resonsible for sensitivity of CikA to DBMIB, influences the levels of KaiA. The chain is Light dependent period A from Synechococcus elongatus (strain ATCC 33912 / PCC 7942 / FACHB-805) (Anacystis nidulans R2).